Reading from the N-terminus, the 886-residue chain is Pyruvate dehydrogenase E1 component (886 aa).

In terms of assembly, homodimer. Part of the PDH complex, consisting of multiple copies of pyruvate dehydrogenase (E1), dihydrolipoamide acetyltransferase (E2) and lipoamide dehydrogenase (E3). Requires thiamine diphosphate as cofactor.

The enzyme catalyses N(6)-[(R)-lipoyl]-L-lysyl-[protein] + pyruvate + H(+) = N(6)-[(R)-S(8)-acetyldihydrolipoyl]-L-lysyl-[protein] + CO2. Component of the pyruvate dehydrogenase (PDH) complex, that catalyzes the overall conversion of pyruvate to acetyl-CoA and CO(2). The chain is Pyruvate dehydrogenase E1 component (aceE) from Haemophilus influenzae (strain ATCC 51907 / DSM 11121 / KW20 / Rd).